A 314-amino-acid chain; its full sequence is Methionyl-tRNA formyltransferase (314 aa).

112–115 serves as a coordination point for (6S)-5,6,7,8-tetrahydrofolate; it reads SLLP.

This sequence belongs to the Fmt family.

The enzyme catalyses L-methionyl-tRNA(fMet) + (6R)-10-formyltetrahydrofolate = N-formyl-L-methionyl-tRNA(fMet) + (6S)-5,6,7,8-tetrahydrofolate + H(+). In terms of biological role, attaches a formyl group to the free amino group of methionyl-tRNA(fMet). The formyl group appears to play a dual role in the initiator identity of N-formylmethionyl-tRNA by promoting its recognition by IF2 and preventing the misappropriation of this tRNA by the elongation apparatus. In Buchnera aphidicola subsp. Acyrthosiphon pisum (strain 5A), this protein is Methionyl-tRNA formyltransferase.